The chain runs to 212 residues: Prolactin (212 aa).

Residues 1-26 (MARCCKCPRLHLAVTVLACVLVFTEG) form the signal peptide. 2 disulfide bridges follow: Cys-71/Cys-185 and Cys-202/Cys-212.

The protein belongs to the somatotropin/prolactin family. In terms of tissue distribution, pituitary gland.

The protein localises to the secreted. The polypeptide is Prolactin (prl) (Ictalurus punctatus (Channel catfish)).